The sequence spans 251 residues: Triosephosphate isomerase (251 aa).

Substrate contacts are provided by asparagine 10 and lysine 12. Histidine 95 functions as the Electrophile in the catalytic mechanism. Glutamate 167 acts as the Proton acceptor in catalysis.

The protein belongs to the triosephosphate isomerase family. Homodimer.

It catalyses the reaction D-glyceraldehyde 3-phosphate = dihydroxyacetone phosphate. It participates in carbohydrate biosynthesis; gluconeogenesis. It functions in the pathway carbohydrate degradation; glycolysis; D-glyceraldehyde 3-phosphate from glycerone phosphate: step 1/1. The protein is Triosephosphate isomerase (TPI) of Coprinopsis cinerea (strain Okayama-7 / 130 / ATCC MYA-4618 / FGSC 9003) (Inky cap fungus).